Consider the following 252-residue polypeptide: Imidazole glycerol phosphate synthase subunit HisF (252 aa).

Residues aspartate 11 and aspartate 130 contribute to the active site.

Belongs to the HisA/HisF family. As to quaternary structure, heterodimer of HisH and HisF.

Its subcellular location is the cytoplasm. The enzyme catalyses 5-[(5-phospho-1-deoxy-D-ribulos-1-ylimino)methylamino]-1-(5-phospho-beta-D-ribosyl)imidazole-4-carboxamide + L-glutamine = D-erythro-1-(imidazol-4-yl)glycerol 3-phosphate + 5-amino-1-(5-phospho-beta-D-ribosyl)imidazole-4-carboxamide + L-glutamate + H(+). Its pathway is amino-acid biosynthesis; L-histidine biosynthesis; L-histidine from 5-phospho-alpha-D-ribose 1-diphosphate: step 5/9. IGPS catalyzes the conversion of PRFAR and glutamine to IGP, AICAR and glutamate. The HisF subunit catalyzes the cyclization activity that produces IGP and AICAR from PRFAR using the ammonia provided by the HisH subunit. In Bacillus cereus (strain AH187), this protein is Imidazole glycerol phosphate synthase subunit HisF.